A 597-amino-acid chain; its full sequence is Dynein intermediate chain 3, ciliary (597 aa).

WD repeat units follow at residues 159-210, 213-253, 260-301, 314-354, 361-400, 404-444, and 449-488; these read EIKR…KPEF, KPVS…QAVE, SHHD…EPTE, ENAQ…PPEK, EHIG…SSIM, YHMS…KDPT, and VSDD…CTMQ. Disordered stretches follow at residues 512–546 and 562–597; these read RQRE…VAAA and AAQQ…EKEG. The segment covering 528 to 542 has biased composition (acidic residues); the sequence is QDDDEEGGPDEEEDL. Positions 584-597 are enriched in basic and acidic residues; it reads GSEKKDTENGEKEG.

It belongs to the dynein intermediate chain family. In terms of assembly, consists of at least two heavy chains (alpha and beta), three intermediate chains and several light chains.

It localises to the cytoplasm. The protein localises to the cytoskeleton. Its subcellular location is the cilium axoneme. Functionally, may play a role in the regulation of dynein heavy chain activity. In Heliocidaris crassispina (Sea urchin), this protein is Dynein intermediate chain 3, ciliary.